Here is a 247-residue protein sequence, read N- to C-terminus: Adenosylcobinamide-GDP ribazoletransferase (247 aa).

A run of 5 helical transmembrane segments spans residues 34-54, 59-79, 113-133, 138-158, and 194-214; these read IITF…VFMV, CGVP…TGGF, GGLA…ELAL, ILAS…LLMY, and VLLP…AIFI.

Belongs to the CobS family. Mg(2+) serves as cofactor.

The protein resides in the cell inner membrane. The catalysed reaction is alpha-ribazole + adenosylcob(III)inamide-GDP = adenosylcob(III)alamin + GMP + H(+). It carries out the reaction alpha-ribazole 5'-phosphate + adenosylcob(III)inamide-GDP = adenosylcob(III)alamin 5'-phosphate + GMP + H(+). Its pathway is cofactor biosynthesis; adenosylcobalamin biosynthesis; adenosylcobalamin from cob(II)yrinate a,c-diamide: step 7/7. Joins adenosylcobinamide-GDP and alpha-ribazole to generate adenosylcobalamin (Ado-cobalamin). Also synthesizes adenosylcobalamin 5'-phosphate from adenosylcobinamide-GDP and alpha-ribazole 5'-phosphate. In Escherichia coli (strain 55989 / EAEC), this protein is Adenosylcobinamide-GDP ribazoletransferase.